A 115-amino-acid polypeptide reads, in one-letter code: Large ribosomal subunit protein eL30 (115 aa).

Phosphoserine is present on residues S10 and S16. K26 bears the N6-acetyllysine; alternate mark. K26 is covalently cross-linked (Glycyl lysine isopeptide (Lys-Gly) (interchain with G-Cter in SUMO2); alternate).

It belongs to the eukaryotic ribosomal protein eL30 family. As to quaternary structure, component of the large ribosomal subunit.

The protein resides in the cytoplasm. In terms of biological role, component of the large ribosomal subunit. The ribosome is a large ribonucleoprotein complex responsible for the synthesis of proteins in the cell. In Oryctolagus cuniculus (Rabbit), this protein is Large ribosomal subunit protein eL30 (RPL30).